Consider the following 295-residue polypeptide: Ribosomal protein L11 methyltransferase (295 aa).

Residues Thr-146, Gly-167, Asp-189, and Asn-231 each contribute to the S-adenosyl-L-methionine site.

It belongs to the methyltransferase superfamily. PrmA family.

It is found in the cytoplasm. The enzyme catalyses L-lysyl-[protein] + 3 S-adenosyl-L-methionine = N(6),N(6),N(6)-trimethyl-L-lysyl-[protein] + 3 S-adenosyl-L-homocysteine + 3 H(+). Methylates ribosomal protein L11. This is Ribosomal protein L11 methyltransferase from Vibrio parahaemolyticus serotype O3:K6 (strain RIMD 2210633).